Here is a 404-residue protein sequence, read N- to C-terminus: Glutamate-pyruvate aminotransferase AlaA (404 aa).

L-alanine is bound by residues Gly41 and Asn179. The residue at position 240 (Lys240) is an N6-(pyridoxal phosphate)lysine. Arg378 lines the L-alanine pocket.

It belongs to the class-I pyridoxal-phosphate-dependent aminotransferase family. Homodimer. It depends on pyridoxal 5'-phosphate as a cofactor.

It carries out the reaction L-alanine + 2-oxoglutarate = pyruvate + L-glutamate. It participates in amino-acid biosynthesis; L-alanine biosynthesis. Its function is as follows. Involved in the biosynthesis of alanine. Catalyzes the transamination of pyruvate by glutamate, leading to the formation of L-alanine and 2-oxoglutarate. Is also able to catalyze the reverse reaction. In Haemophilus influenzae (strain ATCC 51907 / DSM 11121 / KW20 / Rd), this protein is Glutamate-pyruvate aminotransferase AlaA (alaA).